The chain runs to 502 residues: Probable glycine dehydrogenase (decarboxylating) subunit 2 (502 aa).

An N6-(pyridoxal phosphate)lysine modification is found at K273.

It belongs to the GcvP family. C-terminal subunit subfamily. The glycine cleavage system is composed of four proteins: P, T, L and H. In this organism, the P 'protein' is a heterodimer of two subunits. Pyridoxal 5'-phosphate serves as cofactor.

It carries out the reaction N(6)-[(R)-lipoyl]-L-lysyl-[glycine-cleavage complex H protein] + glycine + H(+) = N(6)-[(R)-S(8)-aminomethyldihydrolipoyl]-L-lysyl-[glycine-cleavage complex H protein] + CO2. The glycine cleavage system catalyzes the degradation of glycine. The P protein binds the alpha-amino group of glycine through its pyridoxal phosphate cofactor; CO(2) is released and the remaining methylamine moiety is then transferred to the lipoamide cofactor of the H protein. This chain is Probable glycine dehydrogenase (decarboxylating) subunit 2, found in Pyrococcus furiosus (strain ATCC 43587 / DSM 3638 / JCM 8422 / Vc1).